Here is a 253-residue protein sequence, read N- to C-terminus: Pimeloyl-[acyl-carrier protein] methyl ester esterase (253 aa).

Residues Trp18, 78–79, and 139–143 each bind substrate; these read SL and FLALD. Ser78 (nucleophile) is an active-site residue. Active-site residues include Asp203 and His231. His231 serves as a coordination point for substrate.

The protein belongs to the AB hydrolase superfamily. Carboxylesterase BioH family. As to quaternary structure, monomer.

It localises to the cytoplasm. It carries out the reaction 6-carboxyhexanoyl-[ACP] methyl ester + H2O = 6-carboxyhexanoyl-[ACP] + methanol + H(+). The protein operates within cofactor biosynthesis; biotin biosynthesis. Its function is as follows. The physiological role of BioH is to remove the methyl group introduced by BioC when the pimeloyl moiety is complete. It allows to synthesize pimeloyl-ACP via the fatty acid synthetic pathway through the hydrolysis of the ester bonds of pimeloyl-ACP esters. This Xanthomonas campestris pv. campestris (strain 8004) protein is Pimeloyl-[acyl-carrier protein] methyl ester esterase.